The primary structure comprises 461 residues: Nicotianamine aminotransferase A (461 aa).

Residues 1–29 are disordered; it reads MVHQSNGHGEAAAAAANGKSNGHAAAANG. Positions 11 to 29 are enriched in low complexity; sequence AAAAAANGKSNGHAAAANG. Lys289 carries the post-translational modification N6-(pyridoxal phosphate)lysine.

Belongs to the class-I pyridoxal-phosphate-dependent aminotransferase family. It depends on pyridoxal 5'-phosphate as a cofactor. As to expression, expressed in roots, but not in leaves.

It catalyses the reaction nicotianamine + 2-oxoglutarate = 3''-deamino-3''-oxonicotianamine + L-glutamate. Its function is as follows. Involved in biosynthesis of mugineic acid family phytosiderophores. This Hordeum vulgare (Barley) protein is Nicotianamine aminotransferase A.